The primary structure comprises 142 residues: ATP synthase epsilon chain (142 aa).

It belongs to the ATPase epsilon chain family. As to quaternary structure, F-type ATPases have 2 components, CF(1) - the catalytic core - and CF(0) - the membrane proton channel. CF(1) has five subunits: alpha(3), beta(3), gamma(1), delta(1), epsilon(1). CF(0) has three main subunits: a, b and c.

The protein localises to the cell inner membrane. In terms of biological role, produces ATP from ADP in the presence of a proton gradient across the membrane. This is ATP synthase epsilon chain from Shewanella baltica (strain OS155 / ATCC BAA-1091).